The following is a 215-amino-acid chain: Peroxiredoxin (215 aa).

The region spanning 6 to 161 is the Thioredoxin domain; sequence PLIGEEFPRL…ILRAVRALQT (156 aa). Cys-48 acts as the Cysteine sulfenic acid (-SOH) intermediate in catalysis. Position 124 (Arg-124) interacts with substrate. Cys-205 and Cys-211 are disulfide-bonded.

It belongs to the peroxiredoxin family. Prx6 subfamily. In terms of assembly, homodecamer. Pentamer of dimers that assemble into a ring structure.

The protein localises to the cytoplasm. The catalysed reaction is a hydroperoxide + [thioredoxin]-dithiol = an alcohol + [thioredoxin]-disulfide + H2O. In terms of biological role, thiol-specific peroxidase that catalyzes the reduction of hydrogen peroxide and organic hydroperoxides to water and alcohols, respectively. Plays a role in cell protection against oxidative stress by detoxifying peroxides. The polypeptide is Peroxiredoxin (Thermotoga petrophila (strain ATCC BAA-488 / DSM 13995 / JCM 10881 / RKU-1)).